Here is a 205-residue protein sequence, read N- to C-terminus: Protein-L-isoaspartate O-methyltransferase (205 aa).

Ser56 is an active-site residue.

Belongs to the methyltransferase superfamily. L-isoaspartyl/D-aspartyl protein methyltransferase family.

The protein localises to the cytoplasm. It catalyses the reaction [protein]-L-isoaspartate + S-adenosyl-L-methionine = [protein]-L-isoaspartate alpha-methyl ester + S-adenosyl-L-homocysteine. Functionally, catalyzes the methyl esterification of L-isoaspartyl residues in peptides and proteins that result from spontaneous decomposition of normal L-aspartyl and L-asparaginyl residues. It plays a role in the repair and/or degradation of damaged proteins. In Pyrobaculum aerophilum (strain ATCC 51768 / DSM 7523 / JCM 9630 / CIP 104966 / NBRC 100827 / IM2), this protein is Protein-L-isoaspartate O-methyltransferase.